A 345-amino-acid polypeptide reads, in one-letter code: Cytoplasmic envelopment protein 2 (345 aa).

Residues 26–35 (KLVGKSRKHR) form a nuclear localization signal 1 region. The interval 55 to 63 (CILCQLLLL) is nuclear export signal. A nuclear localization signal 2 region spans residues 90–94 (RRRRR).

It belongs to the herpesviridae cytoplasmic envelopment protein 2 family. In terms of assembly, interacts with cytoplasmic envelopment protein 3 and with the capsid. Interacts with host STING1; this interaction prevents viral DNA-triggered antiviral immune response.

It is found in the virion tegument. The protein localises to the host cytoplasm. Its subcellular location is the host nucleus. Functionally, plays a critical role in cytoplasmic virus egress. Participates in the final step of tegumentation and envelope acquisition within the host cytoplasm by directly interacting with the capsid. Upon virion binding to target cell, a signaling cascade is triggered to disrupt the interaction with the capsid, thereby preparing capsid uncoating. Additionally, antagonizes the viral DNA-triggered antiviral immune response by targeting host STING1 and preventing its dimerization and trafficking. This Human cytomegalovirus (strain AD169) (HHV-5) protein is Cytoplasmic envelopment protein 2 (UL94).